The primary structure comprises 308 residues: Ornithine carbamoyltransferase (308 aa).

Residues 51-54 (STRT), glutamine 78, arginine 102, and 129-132 (HPTQ) contribute to the carbamoyl phosphate site. L-ornithine is bound by residues asparagine 160, aspartate 224, and 228–229 (SM). Carbamoyl phosphate is bound by residues 264–265 (CL) and arginine 292.

It belongs to the aspartate/ornithine carbamoyltransferase superfamily. OTCase family.

The protein localises to the cytoplasm. The enzyme catalyses carbamoyl phosphate + L-ornithine = L-citrulline + phosphate + H(+). It participates in amino-acid biosynthesis; L-arginine biosynthesis; L-arginine from L-ornithine and carbamoyl phosphate: step 1/3. Reversibly catalyzes the transfer of the carbamoyl group from carbamoyl phosphate (CP) to the N(epsilon) atom of ornithine (ORN) to produce L-citrulline. This Caldicellulosiruptor saccharolyticus (strain ATCC 43494 / DSM 8903 / Tp8T 6331) protein is Ornithine carbamoyltransferase.